The chain runs to 595 residues: Adenine deaminase 3 (595 aa).

This sequence belongs to the metallo-dependent hydrolases superfamily. Adenine deaminase family. Mn(2+) serves as cofactor.

It catalyses the reaction adenine + H2O + H(+) = hypoxanthine + NH4(+). The chain is Adenine deaminase 3 from Rhizobium meliloti (strain 1021) (Ensifer meliloti).